The chain runs to 107 residues: MKALSVLCFHNPFKRCLGQKSFFVGDSFFIPTPKRLVLGKLRLSNYTAFHDLIIHDLFIYIFILNFFFFPFCNNFNYWKVFHVAQPRIYHHSRLVMILKVSLECAVS.

A helical transmembrane segment spans residues 52–72 (LIIHDLFIYIFILNFFFFPFC).

The protein resides in the membrane. This is an uncharacterized protein from Saccharomyces cerevisiae (strain ATCC 204508 / S288c) (Baker's yeast).